Reading from the N-terminus, the 195-residue chain is Probable GTP-binding protein EngB (195 aa).

The EngB-type G domain maps to 22–194 (LKGEVAFVGR…LDLISTLLKE (173 aa)). GTP contacts are provided by residues 30–37 (GRSNVGKS), 56–60 (GKTRS), 74–77 (DLPG), 141–144 (TKMD), and 173–175 (TSS). Mg(2+) contacts are provided by serine 37 and threonine 58.

The protein belongs to the TRAFAC class TrmE-Era-EngA-EngB-Septin-like GTPase superfamily. EngB GTPase family. The cofactor is Mg(2+).

Necessary for normal cell division and for the maintenance of normal septation. The chain is Probable GTP-binding protein EngB from Thermotoga sp. (strain RQ2).